The primary structure comprises 472 residues: Regulator of G-protein signaling 6 (472 aa).

Positions 40 to 115 constitute a DEP domain; that stretch reads KTGGVPIRTV…DDGTFYRFQA (76 aa). The region spanning 261 to 330 is the G protein gamma domain; the sequence is IRKQITFLNA…MSKEPSQQRV (70 aa). One can recognise an RGS domain in the interval 336–441; it reads SFDEILKDQV…LMKSDSYARF (106 aa).

As to quaternary structure, interacts with GNB5. Interacts with RGS7BP, leading to regulate the subcellular location of the heterodimer formed with GNB5. Interacts with GNAI1.

It is found in the cytoplasm. The protein resides in the cytosol. The protein localises to the membrane. It localises to the nucleus. Its subcellular location is the cell membrane. Its function is as follows. Regulates G protein-coupled receptor signaling cascades. Inhibits signal transduction by increasing the GTPase activity of G protein alpha subunits, thereby driving them into their inactive GDP-bound form. The RGS6/GNB5 dimer enhances GNAO1 GTPase activity. The polypeptide is Regulator of G-protein signaling 6 (RGS6) (Homo sapiens (Human)).